Here is a 137-residue protein sequence, read N- to C-terminus: Large ribosomal subunit protein uL16 (137 aa).

Over residues 1 to 17 the composition is skewed to basic residues; the sequence is MLQPKRTKFRKTHKGRN. Residues 1–24 form a disordered region; it reads MLQPKRTKFRKTHKGRNRGLANSG.

This sequence belongs to the universal ribosomal protein uL16 family. As to quaternary structure, part of the 50S ribosomal subunit.

Its function is as follows. Binds 23S rRNA and is also seen to make contacts with the A and possibly P site tRNAs. This chain is Large ribosomal subunit protein uL16, found in Aeromonas hydrophila subsp. hydrophila (strain ATCC 7966 / DSM 30187 / BCRC 13018 / CCUG 14551 / JCM 1027 / KCTC 2358 / NCIMB 9240 / NCTC 8049).